Reading from the N-terminus, the 399-residue chain is Acetylornithine aminotransferase (399 aa).

Pyridoxal 5'-phosphate-binding positions include 102 to 103 (GA) and phenylalanine 135. Arginine 138 contributes to the N(2)-acetyl-L-ornithine binding site. 220-223 (DEIQ) lines the pyridoxal 5'-phosphate pocket. N6-(pyridoxal phosphate)lysine is present on lysine 249. Residue serine 277 coordinates N(2)-acetyl-L-ornithine. Position 278 (threonine 278) interacts with pyridoxal 5'-phosphate.

This sequence belongs to the class-III pyridoxal-phosphate-dependent aminotransferase family. ArgD subfamily. As to quaternary structure, homodimer. Requires pyridoxal 5'-phosphate as cofactor.

Its subcellular location is the cytoplasm. It catalyses the reaction N(2)-acetyl-L-ornithine + 2-oxoglutarate = N-acetyl-L-glutamate 5-semialdehyde + L-glutamate. Its pathway is amino-acid biosynthesis; L-arginine biosynthesis; N(2)-acetyl-L-ornithine from L-glutamate: step 4/4. The protein is Acetylornithine aminotransferase of Oceanobacillus iheyensis (strain DSM 14371 / CIP 107618 / JCM 11309 / KCTC 3954 / HTE831).